We begin with the raw amino-acid sequence, 269 residues long: Thyroxine 5-deiodinase (269 aa).

The Cytoplasmic segment spans residues 1-14; it reads MLPAPHTCCRLLQQ. The chain crosses the membrane as a helical; Signal-anchor for type II membrane protein span at residues 15–35; it reads LLACCLLLPRFLLTVLLLWLL. Topologically, residues 36 to 269 are extracellular; that stretch reads DFPCVRRRVI…TGNGALVIQV (234 aa). The active site involves U133. Position 133 (U133) is a non-standard amino acid, selenocysteine.

It belongs to the iodothyronine deiodinase family. As to quaternary structure, monomer. Homodimer. May undergo minor heretodimerization with DIO1 and DIO2.

The protein resides in the cell membrane. The protein localises to the endosome membrane. It carries out the reaction 3,3',5'-triiodo-L-thyronine + iodide + A + H(+) = L-thyroxine + AH2. The catalysed reaction is 3,3'-diiodo-L-thyronine + iodide + A + H(+) = 3,3',5-triiodo-L-thyronine + AH2. It catalyses the reaction 3-iodo-L-thyronine + iodide + A + H(+) = 3,5-diiodo-L-thyronine + AH2. The enzyme catalyses L-thyronine + iodide + A + H(+) = 3-iodo-L-thyronine + AH2. It carries out the reaction 3',5'-diiodo-L-thyronine + iodide + A + H(+) = 3,3',5'-triiodo-L-thyronine + AH2. The catalysed reaction is 3'-iodo-L-thyronine + iodide + A + H(+) = 3,3'-diiodo-L-thyronine + AH2. It catalyses the reaction 3,3',5'-triiodothyronamine + iodide + A + H(+) = 3,3',5,5'-tetraiodothyronamine + AH2. The enzyme catalyses 3',5'-diiodothyronamine + iodide + A + H(+) = 3,3',5'-triiodothyronamine + AH2. It carries out the reaction 3,3'-diiodothyronamine + iodide + A + H(+) = 3,3',5-triiodothyronamine + AH2. The catalysed reaction is 3-iodothyronamine + iodide + A + H(+) = 3,5-diiodothyronamine + AH2. It catalyses the reaction 3'-iodothyronamine + iodide + A + H(+) = 3,3'-diiodothyronamine + AH2. The enzyme catalyses thyronamine + iodide + A + H(+) = 3-iodothyronamine + AH2. Its function is as follows. Plays a crucial role in the metabolism of thyroid hormones (TH) and has specific roles in TH activation and inactivation by deiodination. Catalyzes the deiodination of L-thyroxine (T4) to 3,3',5'-triiodothyronine (rT3), 3,5-diiodothyronine (3,5-T2) to 3-monoiodothyronine (3-T1), rT3 to 3',5'-diiodothyronine (3',5'-T2) and 3,3'-diiodothyronine (3,3'-T2) to 3'-monoiodothyronine (3'-T1) via inner-ring deiodination (IRD). Catalyzes the deiodination of 3,5,3'-triiodothyronine (T3) to 3,3'-diiodothyronine (3,3'-T2) via IRD. Catalyzes the deiodination of 3-T1 to L-thyronine (T0) via outer-ring deiodination (ORD). Catalyzes the tyrosyl ring deiodinations of 3,3',5,5'-tetraiodothyronamine, 3,3',5'-triiodothyronamine, 3,5,3'-triiodothyronamine, 3,5-diiodothyronamine, 3,3'-diiodothyronamine and 3-iodothyronamine. The sequence is that of Thyroxine 5-deiodinase (dio3) from Aquarana catesbeiana (American bullfrog).